We begin with the raw amino-acid sequence, 160 residues long: MIHDRIEDFLASLPRTGALAGLDLGTKTVGVAVSDGLRRIATPLLTVRRTKFTEDAAKLKAIADERRLVGIVLGLPRNMDGSEGPRAQSTRAFARNLVQVLPLPVGFWDERLSTVAAERALLEADTSRKRRAEVIDHVAAGYILQGVLDRLDWLGREGGA.

This sequence belongs to the YqgF nuclease family.

The protein localises to the cytoplasm. In terms of biological role, could be a nuclease involved in processing of the 5'-end of pre-16S rRNA. The protein is Putative pre-16S rRNA nuclease of Cereibacter sphaeroides (strain KD131 / KCTC 12085) (Rhodobacter sphaeroides).